We begin with the raw amino-acid sequence, 133 residues long: Ribosome-binding factor A (133 aa).

The protein belongs to the RbfA family. Monomer. Binds 30S ribosomal subunits, but not 50S ribosomal subunits or 70S ribosomes.

The protein resides in the cytoplasm. One of several proteins that assist in the late maturation steps of the functional core of the 30S ribosomal subunit. Associates with free 30S ribosomal subunits (but not with 30S subunits that are part of 70S ribosomes or polysomes). Required for efficient processing of 16S rRNA. May interact with the 5'-terminal helix region of 16S rRNA. The polypeptide is Ribosome-binding factor A (Enterobacter sp. (strain 638)).